The following is a 51-amino-acid chain: Lysis protein for colicin A (51 aa).

An N-terminal signal peptide occupies residues 1–18 (MKKIIICVILLAIMLLAA). Cysteine 19 carries the N-palmitoyl cysteine lipid modification. A lipid anchor (S-diacylglycerol cysteine) is attached at cysteine 19. A disordered region spans residues 27-51 (TGGGSVSPSSIVTGVSMGSDGVGNP).

It localises to the cell outer membrane. Lysis proteins are required for both colicin release and partial cell lysis. In Citrobacter freundii, this protein is Lysis protein for colicin A (cal).